The sequence spans 352 residues: Phosphoribosylformylglycinamidine cyclo-ligase (352 aa).

The protein belongs to the AIR synthase family.

The protein resides in the cytoplasm. The catalysed reaction is 2-formamido-N(1)-(5-O-phospho-beta-D-ribosyl)acetamidine + ATP = 5-amino-1-(5-phospho-beta-D-ribosyl)imidazole + ADP + phosphate + H(+). Its pathway is purine metabolism; IMP biosynthesis via de novo pathway; 5-amino-1-(5-phospho-D-ribosyl)imidazole from N(2)-formyl-N(1)-(5-phospho-D-ribosyl)glycinamide: step 2/2. The polypeptide is Phosphoribosylformylglycinamidine cyclo-ligase (Stenotrophomonas maltophilia (strain K279a)).